A 222-amino-acid polypeptide reads, in one-letter code: Uridine kinase (222 aa).

Residue 13 to 20 (GGSGAGKT) participates in ATP binding.

Belongs to the uridine kinase family.

It is found in the cytoplasm. The catalysed reaction is uridine + ATP = UMP + ADP + H(+). The enzyme catalyses cytidine + ATP = CMP + ADP + H(+). Its pathway is pyrimidine metabolism; CTP biosynthesis via salvage pathway; CTP from cytidine: step 1/3. It participates in pyrimidine metabolism; UMP biosynthesis via salvage pathway; UMP from uridine: step 1/1. In Chlamydia pneumoniae (Chlamydophila pneumoniae), this protein is Uridine kinase.